Consider the following 37-residue polypeptide: MKIRASVRKICEKCRLIRRRRRIMIICLNPKHKQRQG.

It belongs to the bacterial ribosomal protein bL36 family.

The protein resides in the plastid. Its subcellular location is the chloroplast. The sequence is that of Large ribosomal subunit protein bL36c from Angiopteris evecta (Mule's foot fern).